Here is a 285-residue protein sequence, read N- to C-terminus: Short chain dehydrogenase sol3 (285 aa).

NADP(+) is bound by residues Leu-39, Lys-64, and Asp-87. Active-site proton donor residues include Ser-168 and Tyr-200. Residues Tyr-200, Lys-204, and Ser-234 each contribute to the NADP(+) site. Lys-204 (lowers pKa of active site Tyr) is an active-site residue.

It belongs to the short-chain dehydrogenases/reductases (SDR) family.

The protein operates within phytotoxin biosynthesis. Functionally, short chain dehydrogenase; part of the gene cluster that mediates the biosynthesis of the phytotoxin solanapyrone, a causal agent of early blight disease of potato and tomato. The prosolanapyrone synthase sol1 is a polyketide synthase that produces the octaketide desmethylprosolanapyrone I via sequential condensations of 7 malonyl-CoA units with one acetyl-CoA unit, and one methylation step. The octaketide backbone is further methylated by the sol2 O-methyltransferase to yield prosolanapyrone I. Prosolanapyrone I is hydroxylated to prosolanapyrone II by the cytochrome P450 monooxygenase sol6. The solanapyrone synthase sol5 then catalyzes the oxidation of prosolanapyrone II and the subsequent Diels Alder cycloisomerization of the product prosolanapyrone III to solanapyrones A and D. Solanapyrones A and D are then converted into solanapyrones B and E, respectively, by the sol3 dehydrogenase. This is Short chain dehydrogenase sol3 (sol3) from Alternaria solani.